The sequence spans 454 residues: Protein phosphatase 1F (454 aa).

Over residues 1–12 (MSSGAPQKSSPM) the composition is skewed to polar residues. Residues 1–28 (MSSGAPQKSSPMASGAEETPGFLDTLLQ) form a disordered region. The PPM-type phosphatase domain occupies 156 to 413 (LVSIHAIRNT…DNITVMVVFL (258 aa)). Residues Asp-198, Gly-199, Asp-360, and Asp-404 each coordinate Mn(2+). The interval 419–454 (LLEGGNQGEGDPQAEGRRQDLPSSLPEPETQAPPRS) is disordered. Ser-454 carries the post-translational modification Phosphoserine.

This sequence belongs to the PP2C family. As to quaternary structure, associates with FEM1B. Mg(2+) serves as cofactor. It depends on Mn(2+) as a cofactor.

It catalyses the reaction O-phospho-L-seryl-[protein] + H2O = L-seryl-[protein] + phosphate. The enzyme catalyses O-phospho-L-threonyl-[protein] + H2O = L-threonyl-[protein] + phosphate. Its function is as follows. Dephosphorylates and concomitantly deactivates CaM-kinase II activated upon autophosphorylation, and CaM-kinases IV and I activated upon phosphorylation by CaM-kinase kinase. Promotes apoptosis. The sequence is that of Protein phosphatase 1F (PPM1F) from Homo sapiens (Human).